Here is a 168-residue protein sequence, read N- to C-terminus: G/U mismatch-specific DNA glycosylase (168 aa).

Belongs to the uracil-DNA glycosylase (UDG) superfamily. TDG/mug family. As to quaternary structure, binds DNA as a monomer.

The protein resides in the cytoplasm. The enzyme catalyses Specifically hydrolyzes mismatched double-stranded DNA and polynucleotides, releasing free uracil.. In terms of biological role, excises ethenocytosine and uracil, which can arise by alkylation or deamination of cytosine, respectively, from the corresponding mispairs with guanine in ds-DNA. It is capable of hydrolyzing the carbon-nitrogen bond between the sugar-phosphate backbone of the DNA and the mispaired base. The complementary strand guanine functions in substrate recognition. Required for DNA damage lesion repair in stationary-phase cells. The sequence is that of G/U mismatch-specific DNA glycosylase from Citrobacter koseri (strain ATCC BAA-895 / CDC 4225-83 / SGSC4696).